Here is a 247-residue protein sequence, read N- to C-terminus: RNA-free ribonuclease P (247 aa).

A disordered region spans residues 223-247 (SPEGEKEKGEADKKKKSHSEEAEFI).

It belongs to the HARP family.

The catalysed reaction is Endonucleolytic cleavage of RNA, removing 5'-extranucleotides from tRNA precursor.. Its function is as follows. RNA-free RNase P that catalyzes the removal of the 5'-leader sequence from pre-tRNA to produce the mature 5'-terminus. This chain is RNA-free ribonuclease P, found in Methanosarcina acetivorans (strain ATCC 35395 / DSM 2834 / JCM 12185 / C2A).